The following is a 184-amino-acid chain: Ribosome maturation factor RimM (184 aa).

In terms of domain architecture, PRC barrel spans 101–174 (PDEYYDHQLV…RVVIADRPGL (74 aa)).

It belongs to the RimM family. Binds ribosomal protein uS19.

Its subcellular location is the cytoplasm. An accessory protein needed during the final step in the assembly of 30S ribosomal subunit, possibly for assembly of the head region. Essential for efficient processing of 16S rRNA. May be needed both before and after RbfA during the maturation of 16S rRNA. It has affinity for free ribosomal 30S subunits but not for 70S ribosomes. This is Ribosome maturation factor RimM from Nocardioides sp. (strain ATCC BAA-499 / JS614).